The following is a 256-amino-acid chain: uncharacterized protein (256 aa).

An N-terminal signal peptide occupies residues 1–24; it reads MIKRVNKLVIGISLLFLVISITAG. A lipid anchor (N-palmitoyl cysteine) is attached at Cys25. Residue Cys25 is the site of S-diacylglycerol cysteine attachment.

The protein belongs to the staphylococcal tandem lipoprotein family.

Its subcellular location is the cell membrane. This is an uncharacterized protein from Staphylococcus aureus (strain bovine RF122 / ET3-1).